Consider the following 709-residue polypeptide: Dibasic-processing endoprotease (709 aa).

A signal peptide spans 1–22 (MHPALLCGPILAIFLQFLVSSC). Propeptides lie at residues 23-82 (SPLE…IRKR) and 83-102 (GIDAGILELERQTPRWRYKR). At 103 to 668 (DASESDELLN…QPVLEPSYRE (566 aa)) the chain is on the lumenal side. A Peptidase S8 domain is found at 128–440 (QWHIFNSNNP…FGKLDASKFV (313 aa)). Asn-155 carries N-linked (GlcNAc...) asparagine glycosylation. Residues Asp-162 and His-200 each act as charge relay system in the active site. 2 cysteine pairs are disulfide-bonded: Cys-216–Cys-363 and Cys-308–Cys-338. Residue Ser-371 is the Charge relay system of the active site. The region spanning 449–588 (VNPQTWLIAP…QLALWGESEN (140 aa)) is the P/Homo B domain. Residues Asn-463, Asn-471, and Asn-620 are each glycosylated (N-linked (GlcNAc...) asparagine). A helical transmembrane segment spans residues 669–693 (IVAFITFFLLFAFIFVAVIWTWISA). Residues 694-709 (FWKAKAPPPLSQQEIA) are Cytoplasmic-facing.

Belongs to the peptidase S8 family. Furin subfamily. The cofactor is Ca(2+). N-glycosylated.

Its subcellular location is the golgi apparatus. It is found in the trans-Golgi network membrane. In terms of biological role, membrane-bound, subtilisin-like serine protease that processes the P-factor precursor and other precursor proteins. Essential for cell viability. Cleaves substrate on the C-terminal side of dibasic residues. The sequence is that of Dibasic-processing endoprotease (krp1) from Schizosaccharomyces pombe (strain 972 / ATCC 24843) (Fission yeast).